The sequence spans 432 residues: Adenylosuccinate synthetase (432 aa).

GTP contacts are provided by residues 13-19 (GDEGKGK) and 41-43 (GHT). The active-site Proton acceptor is D14. Mg(2+) contacts are provided by D14 and G41. IMP is bound by residues 14–17 (DEGK), 39–42 (NAGH), T130, R144, Q225, T240, and R304. H42 functions as the Proton donor in the catalytic mechanism. 300-306 (ATTGRRR) lines the substrate pocket. Residues R306, 332 to 334 (KLD), and 415 to 417 (STG) contribute to the GTP site.

Belongs to the adenylosuccinate synthetase family. As to quaternary structure, homodimer. Mg(2+) is required as a cofactor.

The protein resides in the cytoplasm. It catalyses the reaction IMP + L-aspartate + GTP = N(6)-(1,2-dicarboxyethyl)-AMP + GDP + phosphate + 2 H(+). Its pathway is purine metabolism; AMP biosynthesis via de novo pathway; AMP from IMP: step 1/2. Plays an important role in the de novo pathway of purine nucleotide biosynthesis. Catalyzes the first committed step in the biosynthesis of AMP from IMP. The sequence is that of Adenylosuccinate synthetase from Salmonella choleraesuis (strain SC-B67).